The following is a 310-amino-acid chain: Ribosomal RNA large subunit methyltransferase F (310 aa).

Belongs to the methyltransferase superfamily. METTL16/RlmF family.

Its subcellular location is the cytoplasm. The enzyme catalyses adenosine(1618) in 23S rRNA + S-adenosyl-L-methionine = N(6)-methyladenosine(1618) in 23S rRNA + S-adenosyl-L-homocysteine + H(+). Its function is as follows. Specifically methylates the adenine in position 1618 of 23S rRNA. The polypeptide is Ribosomal RNA large subunit methyltransferase F (Psychromonas ingrahamii (strain DSM 17664 / CCUG 51855 / 37)).